Reading from the N-terminus, the 883-residue chain is Phosphoenolpyruvate carboxylase (883 aa).

Residues H138 and K546 contribute to the active site.

Belongs to the PEPCase type 1 family. Mg(2+) is required as a cofactor.

It catalyses the reaction oxaloacetate + phosphate = phosphoenolpyruvate + hydrogencarbonate. In terms of biological role, forms oxaloacetate, a four-carbon dicarboxylic acid source for the tricarboxylic acid cycle. In Shigella flexneri, this protein is Phosphoenolpyruvate carboxylase.